Here is a 313-residue protein sequence, read N- to C-terminus: Olfactory receptor 56A4 (313 aa).

The Extracellular portion of the chain corresponds to 1–28 (MASPSNDSTAPVSEFLLICFPNFQSWQH). Asparagine 6 carries an N-linked (GlcNAc...) asparagine glycan. A helical transmembrane segment spans residues 29–49 (WLSLPLSLLFLLAMGANTTLL). At 50–57 (ITIQLEAS) the chain is on the cytoplasmic side. Residues 58–78 (LHQPLYYLLSLLSLLDIVLCL) traverse the membrane as a helical segment. Topologically, residues 79-102 (TVIPKVLAIFWFDLRSISFPACFL) are extracellular. A disulfide bridge links cysteine 100 with cysteine 192. The helical transmembrane segment at 103 to 123 (QMFIMNSFLTMESCTFMVMAY) threads the bilayer. The Cytoplasmic portion of the chain corresponds to 124–142 (DRYVAICHPLRYPSIITDQ). Residues 143 to 163 (FVARAVVFVIARNAFVSLPVP) form a helical membrane-spanning segment. At 164 to 199 (MLSARLRYCAGNIIKNCICSNLSVSKLSCDDITFNQ) the chain is on the extracellular side. Residue asparagine 184 is glycosylated (N-linked (GlcNAc...) asparagine). Residues 200-220 (LYQFVAGWTLLGSDLILIVIS) form a helical membrane-spanning segment. At 221 to 240 (YSFILKVVLRIKAEGAVAKA) the chain is on the cytoplasmic side. A helical transmembrane segment spans residues 241 to 261 (LSTCGSHFILILFFSTVLLVL). The Extracellular portion of the chain corresponds to 262 to 276 (VITNLARKRIPPDVP). A helical transmembrane segment spans residues 277–297 (ILLNILHHLIPPALNPIVYGV). Topologically, residues 298–313 (RTKEIKQGIQNLLKRL) are cytoplasmic.

This sequence belongs to the G-protein coupled receptor 1 family.

Its subcellular location is the cell membrane. Functionally, odorant receptor. The chain is Olfactory receptor 56A4 (OR56A4) from Homo sapiens (Human).